A 102-amino-acid chain; its full sequence is MTDTLSPWHLYMLRLPNGMLYTGITTDVERRLAQHQAGKGAKALRGKGELVLAFHCLAGDRSKALRLEYRVKQLSKTQKERLVNHPPLTLDHLLPDAEIKTG.

A GIY-YIG domain is found at 6–81; it reads SPWHLYMLRL…KQLSKTQKER (76 aa).

The protein belongs to the UPF0213 family.

This Serratia liquefaciens protein is UPF0213 protein in potE 3'region.